The primary structure comprises 546 residues: Probable malate:quinone oxidoreductase (546 aa).

It belongs to the MQO family. FAD serves as cofactor.

It carries out the reaction (S)-malate + a quinone = a quinol + oxaloacetate. It functions in the pathway carbohydrate metabolism; tricarboxylic acid cycle; oxaloacetate from (S)-malate (quinone route): step 1/1. This chain is Probable malate:quinone oxidoreductase, found in Acinetobacter baumannii (strain ACICU).